Here is a 533-residue protein sequence, read N- to C-terminus: 2-succinyl-5-enolpyruvyl-6-hydroxy-3-cyclohexene-1-carboxylate synthase (533 aa).

It belongs to the TPP enzyme family. MenD subfamily. As to quaternary structure, homodimer. Requires Mg(2+) as cofactor. It depends on Mn(2+) as a cofactor. Thiamine diphosphate is required as a cofactor.

It catalyses the reaction isochorismate + 2-oxoglutarate + H(+) = 5-enolpyruvoyl-6-hydroxy-2-succinyl-cyclohex-3-ene-1-carboxylate + CO2. The protein operates within quinol/quinone metabolism; 1,4-dihydroxy-2-naphthoate biosynthesis; 1,4-dihydroxy-2-naphthoate from chorismate: step 2/7. Its pathway is quinol/quinone metabolism; menaquinone biosynthesis. Catalyzes the thiamine diphosphate-dependent decarboxylation of 2-oxoglutarate and the subsequent addition of the resulting succinic semialdehyde-thiamine pyrophosphate anion to isochorismate to yield 2-succinyl-5-enolpyruvyl-6-hydroxy-3-cyclohexene-1-carboxylate (SEPHCHC). The chain is 2-succinyl-5-enolpyruvyl-6-hydroxy-3-cyclohexene-1-carboxylate synthase from Akkermansia muciniphila (strain ATCC BAA-835 / DSM 22959 / JCM 33894 / BCRC 81048 / CCUG 64013 / CIP 107961 / Muc).